Reading from the N-terminus, the 207-residue chain is MLSAQLNDYLAEVGLTATEQQKKQLVDFVGMLNKWNKAFNLTSVRDPEQMLIRHIMDSLVVSPHLKGSRFIDVGTGPGLPGIPLAILNPDKEFVLLDSLGKRIRFQKQVQFELGINNISSIESRVEAYQPKDLFDGVLSRAFASIQDMLHWCHHLPKADGCFYALKGQLSEEEMSQMPAGFVVTDTIELKVPKLDEQRHLLRVIKQD.

S-adenosyl-L-methionine-binding positions include Gly-74, Leu-79, 125–126, and Arg-140; that span reads VE.

Belongs to the methyltransferase superfamily. RNA methyltransferase RsmG family.

It localises to the cytoplasm. The enzyme catalyses guanosine(527) in 16S rRNA + S-adenosyl-L-methionine = N(7)-methylguanosine(527) in 16S rRNA + S-adenosyl-L-homocysteine. Specifically methylates the N7 position of guanine in position 527 of 16S rRNA. This chain is Ribosomal RNA small subunit methyltransferase G, found in Shewanella pealeana (strain ATCC 700345 / ANG-SQ1).